The chain runs to 108 residues: MMTLRDLINKLLGRETSSANTARERLQLVLAHDRVDMSSLTTDLLDKMRKEILDVVAKYVEIDFEEVAVSLETEDRMTALVANLPIKRTISGEIKFKKTDKANKDIKK.

Belongs to the MinE family.

Prevents the cell division inhibition by proteins MinC and MinD at internal division sites while permitting inhibition at polar sites. This ensures cell division at the proper site by restricting the formation of a division septum at the midpoint of the long axis of the cell. This chain is Cell division topological specificity factor, found in Prochlorococcus marinus (strain MIT 9215).